A 238-amino-acid chain; its full sequence is Ubiquinone biosynthesis O-methyltransferase (238 aa).

S-adenosyl-L-methionine contacts are provided by R40, G59, D81, and M126.

This sequence belongs to the methyltransferase superfamily. UbiG/COQ3 family.

The catalysed reaction is a 3-demethylubiquinol + S-adenosyl-L-methionine = a ubiquinol + S-adenosyl-L-homocysteine + H(+). The enzyme catalyses a 3-(all-trans-polyprenyl)benzene-1,2-diol + S-adenosyl-L-methionine = a 2-methoxy-6-(all-trans-polyprenyl)phenol + S-adenosyl-L-homocysteine + H(+). The protein operates within cofactor biosynthesis; ubiquinone biosynthesis. Its function is as follows. O-methyltransferase that catalyzes the 2 O-methylation steps in the ubiquinone biosynthetic pathway. The sequence is that of Ubiquinone biosynthesis O-methyltransferase from Neisseria meningitidis serogroup C (strain 053442).